A 202-amino-acid chain; its full sequence is uncharacterized protein (202 aa).

This sequence belongs to the dienelactone hydrolase family.

This is an uncharacterized protein from Bacillus subtilis (strain 168).